Reading from the N-terminus, the 89-residue chain is Small ribosomal subunit protein bS16c (89 aa).

The protein belongs to the bacterial ribosomal protein bS16 family.

The protein localises to the plastid. It localises to the chloroplast. The protein is Small ribosomal subunit protein bS16c of Glycine max (Soybean).